We begin with the raw amino-acid sequence, 337 residues long: Glyceraldehyde-3-phosphate dehydrogenase (337 aa).

NAD(+)-binding positions include 12–13 (RI), Asp-34, and Arg-79. D-glyceraldehyde 3-phosphate-binding positions include 150–152 (SCT), Thr-181, 210–211 (TG), and Arg-233. Cys-151 functions as the Nucleophile in the catalytic mechanism. Residue Asn-315 coordinates NAD(+).

The protein belongs to the glyceraldehyde-3-phosphate dehydrogenase family. In terms of assembly, homotetramer.

It localises to the cytoplasm. It carries out the reaction D-glyceraldehyde 3-phosphate + phosphate + NAD(+) = (2R)-3-phospho-glyceroyl phosphate + NADH + H(+). The protein operates within carbohydrate degradation; glycolysis; pyruvate from D-glyceraldehyde 3-phosphate: step 1/5. The protein is Glyceraldehyde-3-phosphate dehydrogenase (GPD) of Podospora anserina (Pleurage anserina).